A 496-amino-acid polypeptide reads, in one-letter code: Histidine--tRNA ligase (496 aa).

The protein belongs to the class-II aminoacyl-tRNA synthetase family. As to quaternary structure, homodimer.

It is found in the cytoplasm. The enzyme catalyses tRNA(His) + L-histidine + ATP = L-histidyl-tRNA(His) + AMP + diphosphate + H(+). The chain is Histidine--tRNA ligase from Bartonella bacilliformis (strain ATCC 35685 / KC583 / Herrer 020/F12,63).